The sequence spans 256 residues: Thiazole synthase (256 aa).

Residue Lys95 is the Schiff-base intermediate with DXP of the active site. 1-deoxy-D-xylulose 5-phosphate is bound by residues Gly156, 182-183 (AG), and 204-205 (NT).

Belongs to the ThiG family. In terms of assembly, homotetramer. Forms heterodimers with either ThiH or ThiS.

It is found in the cytoplasm. It carries out the reaction [ThiS sulfur-carrier protein]-C-terminal-Gly-aminoethanethioate + 2-iminoacetate + 1-deoxy-D-xylulose 5-phosphate = [ThiS sulfur-carrier protein]-C-terminal Gly-Gly + 2-[(2R,5Z)-2-carboxy-4-methylthiazol-5(2H)-ylidene]ethyl phosphate + 2 H2O + H(+). It functions in the pathway cofactor biosynthesis; thiamine diphosphate biosynthesis. Its function is as follows. Catalyzes the rearrangement of 1-deoxy-D-xylulose 5-phosphate (DXP) to produce the thiazole phosphate moiety of thiamine. Sulfur is provided by the thiocarboxylate moiety of the carrier protein ThiS. In vitro, sulfur can be provided by H(2)S. This is Thiazole synthase from Salmonella typhi.